Reading from the N-terminus, the 156-residue chain is Small ribosomal subunit protein uS7 (156 aa).

This sequence belongs to the universal ribosomal protein uS7 family. As to quaternary structure, part of the 30S ribosomal subunit. Contacts proteins S9 and S11.

One of the primary rRNA binding proteins, it binds directly to 16S rRNA where it nucleates assembly of the head domain of the 30S subunit. Is located at the subunit interface close to the decoding center, probably blocks exit of the E-site tRNA. The chain is Small ribosomal subunit protein uS7 from Desulfatibacillum aliphaticivorans.